The primary structure comprises 547 residues: Serine/threonine-protein kinase RIO2 (547 aa).

A Protein kinase domain is found at 97–273 (VGNQMGVGKE…RDVKCIREFF (177 aa)). An ATP-binding site is contributed by lysine 123. Aspartate 228 functions as the Proton acceptor in the catalytic mechanism. A phosphoserine mark is found at serine 332, serine 337, serine 350, serine 362, serine 385, and serine 390. The interval 352 to 385 (LEKEADPADESGGSWCCSSTDSKQIKDGGLPEES) is disordered. The Nuclear export signal signature appears at 399–408 (AVEEMERQVL). Positions 404 to 445 (ERQVLPHRSVTEFSEESRRTENDGQPGQRSPAGSEDCDDEPP) are disordered. Residues serine 412, serine 417, serine 433, serine 437, and serine 543 each carry the phosphoserine modification.

Belongs to the protein kinase superfamily. RIO-type Ser/Thr kinase family. As to quaternary structure, associated with late 40S pre-ribosomal particles. Interacts with PLK1 (via its N-terminus). The cofactor is Mg(2+). Post-translationally, autophosphorylated (in vitro). Phosphorylation affects the timing of the metaphase-anaphase transition.

The protein localises to the cytoplasm. The enzyme catalyses L-seryl-[protein] + ATP = O-phospho-L-seryl-[protein] + ADP + H(+). The catalysed reaction is L-threonyl-[protein] + ATP = O-phospho-L-threonyl-[protein] + ADP + H(+). In terms of biological role, serine/threonine-protein kinase involved in the final steps of cytoplasmic maturation of the 40S ribosomal subunit. Involved in export of the 40S pre-ribosome particles (pre-40S) from the nucleus to the cytoplasm. Its kinase activity is required for the release of NOB1, PNO1 and LTV1 from the late pre-40S and the processing of 18S-E pre-rRNA to the mature 18S rRNA. May regulate the timing of the metaphase-anaphase transition during mitotic progression, and its phosphorylation, may regulate this function. This chain is Serine/threonine-protein kinase RIO2 (Riok2), found in Mus musculus (Mouse).